Reading from the N-terminus, the 854-residue chain is Envelope glycoprotein B (854 aa).

A signal peptide spans 1–30; it reads MSKNWFPLLCASVLVVYVSIASSSTGTASG. Topologically, residues 31–723 are virion surface; sequence AVTPTSPTEN…EGVVGFIKNP (693 aa). Residues Asn-40, Asn-48, and Asn-60 are each glycosylated (N-linked (GlcNAc...) asparagine; by host). Cystine bridges form between Cys-69–Cys-524, Cys-86–Cys-480, Cys-160–Cys-225, Cys-317–Cys-364, and Cys-546–Cys-583. The tract at residues 127–133 is involved in fusion and/or binding to host membrane; that stretch reads SYSFIRE. Asn-183 carries an N-linked (GlcNAc...) asparagine; by host glycan. Positions 212–219 are involved in fusion and/or binding to host membrane; sequence GSTWLYTT. Residues Asn-256, Asn-275, Asn-314, Asn-356, Asn-378, Asn-382, Asn-390, Asn-423, Asn-426, Asn-442, Asn-558, and Asn-595 are each glycosylated (N-linked (GlcNAc...) asparagine; by host). Hydrophobic membrane proximal region regions lie at residues 669–721 and 700–720; these read VEGK…GFIK and VAIGAVGGAVASFVEGVVGFI. Residues 724 to 744 form a helical membrane-spanning segment; that stretch reads FGSFTVILFLLAVLGVIYLIY. Topologically, residues 745-854 are intravirion; sequence MRQKRAYEKP…YQKIQNEYEV (110 aa).

Belongs to the herpesviridae glycoprotein B family. In terms of assembly, homotrimer; disulfide-linked. Binds to heparan sulfate proteoglycans. Interacts with gH/gL heterodimer. Post-translationally, a proteolytic cleavage by host furin generates two subunits that remain linked by disulfide bonds.

It localises to the virion membrane. It is found in the host cell membrane. The protein resides in the host endosome membrane. Its subcellular location is the host Golgi apparatus membrane. Its function is as follows. Envelope glycoprotein that forms spikes at the surface of virion envelope. Essential for the initial attachment to heparan sulfate moieties of the host cell surface proteoglycans. Involved in fusion of viral and cellular membranes leading to virus entry into the host cell. Following initial binding to its host receptors, membrane fusion is mediated by the fusion machinery composed at least of gB and the heterodimer gH/gL. May be involved in the fusion between the virion envelope and the outer nuclear membrane during virion egress. The sequence is that of Envelope glycoprotein B from Macaca mulatta (Rhesus macaque).